The chain runs to 190 residues: 3-isopropylmalate dehydratase small subunit (190 aa).

This sequence belongs to the LeuD family. LeuD type 1 subfamily. Heterodimer of LeuC and LeuD.

It catalyses the reaction (2R,3S)-3-isopropylmalate = (2S)-2-isopropylmalate. It participates in amino-acid biosynthesis; L-leucine biosynthesis; L-leucine from 3-methyl-2-oxobutanoate: step 2/4. Functionally, catalyzes the isomerization between 2-isopropylmalate and 3-isopropylmalate, via the formation of 2-isopropylmaleate. This Staphylococcus aureus (strain MRSA252) protein is 3-isopropylmalate dehydratase small subunit.